Reading from the N-terminus, the 132-residue chain is Small ribosomal subunit protein uS8 (132 aa).

It belongs to the universal ribosomal protein uS8 family. In terms of assembly, part of the 30S ribosomal subunit. Contacts proteins S5 and S12.

In terms of biological role, one of the primary rRNA binding proteins, it binds directly to 16S rRNA central domain where it helps coordinate assembly of the platform of the 30S subunit. The chain is Small ribosomal subunit protein uS8 from Geobacillus sp. (strain WCH70).